Here is a 110-residue protein sequence, read N- to C-terminus: MKTINLNAAVKTKCFNGKYDETMWFLMAVEGDIIEVETTEGMGTDFTFTIQVHNFFTGWIYELNTVIVGKIEQNELGEWHYVTARQRAERLIEKMKKVGKLDMQHWKVVK.

This is an uncharacterized protein from Enterobacteria phage T4 (Bacteriophage T4).